Consider the following 126-residue polypeptide: uncharacterized protein (126 aa).

The helical transmembrane segment at 3-23 (NMIVLIIFAAFIIYMIASYVY) threads the bilayer. One can recognise a Rhodanese domain in the interval 39 to 123 (GYRKAQLIDV…GFKKWGGKIK (85 aa)).

Its subcellular location is the cell membrane. This is an uncharacterized protein from Bacillus subtilis (strain 168).